The sequence spans 321 residues: Peroxidase 4 (321 aa).

The first 25 residues, methionine 1 to alanine 25, serve as a signal peptide directing secretion. Glutamine 26 carries the post-translational modification Pyrrolidone carboxylic acid. 4 disulfide bridges follow: cysteine 36–cysteine 116, cysteine 69–cysteine 74, cysteine 122–cysteine 317, and cysteine 201–cysteine 226. Histidine 67 serves as the catalytic Proton acceptor. Residues aspartate 68, valine 71, glycine 73, aspartate 75, and serine 77 each coordinate Ca(2+). Proline 164 lines the substrate pocket. Histidine 194 provides a ligand contact to heme b. Position 195 (threonine 195) interacts with Ca(2+). The N-linked (GlcNAc...) asparagine glycan is linked to asparagine 210. Ca(2+) contacts are provided by aspartate 241, threonine 244, and aspartate 249.

Belongs to the peroxidase family. Classical plant (class III) peroxidase subfamily. Heme b serves as cofactor. Ca(2+) is required as a cofactor.

It is found in the secreted. The catalysed reaction is 2 a phenolic donor + H2O2 = 2 a phenolic radical donor + 2 H2O. Removal of H(2)O(2), oxidation of toxic reductants, biosynthesis and degradation of lignin, suberization, auxin catabolism, response to environmental stresses such as wounding, pathogen attack and oxidative stress. These functions might be dependent on each isozyme/isoform in each plant tissue. This chain is Peroxidase 4, found in Vitis vinifera (Grape).